The sequence spans 473 residues: Probable dipeptidase (473 aa).

The active site involves cysteine 10.

This sequence belongs to the peptidase C69 family.

It catalyses the reaction an L-aminoacyl-L-amino acid + H2O = 2 an L-alpha-amino acid. This is Probable dipeptidase from Latilactobacillus sakei (Lactobacillus sakei).